The primary structure comprises 203 residues: AFG2-interacting ribosome maturation factor (203 aa).

Part of the 55LCC heterohexameric ATPase complex composed at least of AIRIM, AFG2A, AFG2B and CINP. Does not associate with pre-60S ribosomal particles. In terms of processing, phosphorylated on serines by CK2 kinase.

The protein resides in the nucleus. The protein localises to the cytoplasm. Its function is as follows. Part of the 55LCC heterohexameric ATPase complex which is chromatin-associated and promotes replisome proteostasis to maintain replication fork progression and genome stability. Required for replication fork progression, sister chromatid cohesion, and chromosome stability. The ATPase activity is specifically enhanced by replication fork DNA and is coupled to cysteine protease-dependent cleavage of replisome substrates in response to replication fork damage. Uses ATPase activity to process replisome substrates in S-phase, facilitating their proteolytic turnover from chromatin to ensure DNA replication and mitotic fidelity. Involved in the cytoplasmic maturation steps of pre-60S ribosomal particles by promoting the release of shuttling protein RSL24D1/RLP24 from the pre-ribosomal particles. The chain is AFG2-interacting ribosome maturation factor from Homo sapiens (Human).